The chain runs to 147 residues: Austinoid biosynthesis cluster protein H (147 aa).

This sequence belongs to the trt14 isomerase family. As to quaternary structure, homodimer.

It participates in secondary metabolite biosynthesis; terpenoid biosynthesis. Its function is as follows. Part of the gene cluster that mediates the biosynthesis of calidodehydroaustin, a fungal meroterpenoid. The first step of the pathway is the synthesis of 3,5-dimethylorsellinic acid by the polyketide synthase ausA. 3,5-dimethylorsellinic acid is then prenylated by the polyprenyl transferase ausN. Further epoxidation by the FAD-dependent monooxygenase ausM and cyclization by the probable terpene cyclase ausL lead to the formation of protoaustinoid A. Protoaustinoid A is then oxidized to spiro-lactone preaustinoid A3 by the combined action of the FAD-binding monooxygenases ausB and ausC, and the dioxygenase ausE. Acid-catalyzed keto-rearrangement and ring contraction of the tetraketide portion of preaustinoid A3 by ausJ lead to the formation of preaustinoid A4. The aldo-keto reductase ausK, with the help of ausH, is involved in the next step by transforming preaustinoid A4 into isoaustinone which is in turn hydroxylated by the P450 monooxygenase ausI to form austinolide. The cytochrome P450 monooxygenase ausG modifies austinolide to austinol. Austinol is further acetylated to austin by the O-acetyltransferase ausP, which spontaneously changes to dehydroaustin. The cytochrome P450 monooxygenase ausR then converts dehydroaustin is into 7-dehydrodehydroaustin. The hydroxylation catalyzed by ausR permits the O-acetyltransferase ausQ to add an additional acetyl group to the molecule, leading to the formation of acetoxydehydroaustin. The short chain dehydrogenase ausT catalyzes the reduction of the double bond present between carbon atoms 1 and 2 to convert 7-dehydrodehydroaustin into 1,2-dihydro-7-hydroxydehydroaustin. AusQ catalyzes not only an acetylation reaction but also the addition of the PKS ausV diketide product to 1,2-dihydro-7-hydroxydehydroaustin, forming precalidodehydroaustin. Finally, the iron/alpha-ketoglutarate-dependent dioxygenase converts precalidodehydroaustin into calidodehydroaustin. The polypeptide is Austinoid biosynthesis cluster protein H (Aspergillus calidoustus).